A 207-amino-acid polypeptide reads, in one-letter code: Large ribosomal subunit protein uL18 (207 aa).

This sequence belongs to the universal ribosomal protein uL18 family. As to quaternary structure, part of the 50S ribosomal subunit. Contacts the 5S and 23S rRNAs.

This is one of the proteins that bind and probably mediate the attachment of the 5S RNA into the large ribosomal subunit, where it forms part of the central protuberance. The polypeptide is Large ribosomal subunit protein uL18 (Caldivirga maquilingensis (strain ATCC 700844 / DSM 13496 / JCM 10307 / IC-167)).